Reading from the N-terminus, the 375-residue chain is Erythronate-4-phosphate dehydrogenase (375 aa).

The substrate site is built by Ser45 and Thr67. Asp147 lines the NAD(+) pocket. Arg209 is a catalytic residue. Asp233 contacts NAD(+). The active site involves Glu238. Catalysis depends on His255, which acts as the Proton donor. Gly258 provides a ligand contact to NAD(+). Tyr259 is a binding site for substrate.

The protein belongs to the D-isomer specific 2-hydroxyacid dehydrogenase family. PdxB subfamily. As to quaternary structure, homodimer.

The protein resides in the cytoplasm. It carries out the reaction 4-phospho-D-erythronate + NAD(+) = (R)-3-hydroxy-2-oxo-4-phosphooxybutanoate + NADH + H(+). Its pathway is cofactor biosynthesis; pyridoxine 5'-phosphate biosynthesis; pyridoxine 5'-phosphate from D-erythrose 4-phosphate: step 2/5. Catalyzes the oxidation of erythronate-4-phosphate to 3-hydroxy-2-oxo-4-phosphonooxybutanoate. The polypeptide is Erythronate-4-phosphate dehydrogenase (Shewanella amazonensis (strain ATCC BAA-1098 / SB2B)).